Here is a 364-residue protein sequence, read N- to C-terminus: Mannose-1-phosphate guanyltransferase (364 aa).

It belongs to the transferase hexapeptide repeat family.

It localises to the cytoplasm. The enzyme catalyses alpha-D-mannose 1-phosphate + GTP + H(+) = GDP-alpha-D-mannose + diphosphate. Its pathway is nucleotide-sugar biosynthesis; GDP-alpha-D-mannose biosynthesis; GDP-alpha-D-mannose from alpha-D-mannose 1-phosphate (GTP route): step 1/1. Its function is as follows. Involved in cell wall synthesis where it is required for glycosylation. Involved in cell cycle progression through cell-size checkpoint. The sequence is that of Mannose-1-phosphate guanyltransferase (mpg-1) from Neurospora crassa (strain ATCC 24698 / 74-OR23-1A / CBS 708.71 / DSM 1257 / FGSC 987).